Reading from the N-terminus, the 96-residue chain is MNVPTAPTPNKHLNIPDLRFEKVFKKALHRELAPSSSLSRKAGVITKVVVRDVLLMPLLQSFVLSLALMGVKEWLSYIRLKGRTLGDRIRQRLFPI.

The helical transmembrane segment at 53 to 71 (VLLMPLLQSFVLSLALMGV) threads the bilayer.

The protein localises to the membrane. This is an uncharacterized protein from Saccharomyces cerevisiae (strain ATCC 204508 / S288c) (Baker's yeast).